Here is a 136-residue protein sequence, read N- to C-terminus: Nucleoside diphosphate kinase (136 aa).

Residues K9, F57, R85, T91, R102, and N112 each contribute to the ATP site. The active-site Pros-phosphohistidine intermediate is the H115.

It belongs to the NDK family. Homotetramer. Mg(2+) serves as cofactor.

It is found in the cytoplasm. It carries out the reaction a 2'-deoxyribonucleoside 5'-diphosphate + ATP = a 2'-deoxyribonucleoside 5'-triphosphate + ADP. The enzyme catalyses a ribonucleoside 5'-diphosphate + ATP = a ribonucleoside 5'-triphosphate + ADP. In terms of biological role, major role in the synthesis of nucleoside triphosphates other than ATP. The ATP gamma phosphate is transferred to the NDP beta phosphate via a ping-pong mechanism, using a phosphorylated active-site intermediate. The protein is Nucleoside diphosphate kinase of Acetivibrio thermocellus (strain ATCC 27405 / DSM 1237 / JCM 9322 / NBRC 103400 / NCIMB 10682 / NRRL B-4536 / VPI 7372) (Clostridium thermocellum).